The chain runs to 513 residues: RNA-splicing ligase RtcB homolog (513 aa).

Mn(2+)-binding residues include Asp127, Cys130, His235, His267, and His361. A GMP-binding site is contributed by 234–238 (NHYAE). Residues 361-362 (HN), 410-413 (GGTM), Ser417, 436-439 (HGAG), and Lys512 each bind GMP. Residue His436 is the GMP-histidine intermediate of the active site.

It belongs to the RtcB family. As to quaternary structure, catalytic component of the tRNA-splicing ligase complex. Mn(2+) is required as a cofactor.

The catalysed reaction is a 3'-end 3'-phospho-ribonucleotide-RNA + a 5'-end dephospho-ribonucleoside-RNA + GTP = a ribonucleotidyl-ribonucleotide-RNA + GMP + diphosphate. The enzyme catalyses a 3'-end 2',3'-cyclophospho-ribonucleotide-RNA + a 5'-end dephospho-ribonucleoside-RNA + GTP + H2O = a ribonucleotidyl-ribonucleotide-RNA + GMP + diphosphate + H(+). Functionally, catalytic subunit of the tRNA-splicing ligase complex that acts by directly joining spliced tRNA halves to mature-sized tRNAs by incorporating the precursor-derived splice junction phosphate into the mature tRNA as a canonical 3',5'-phosphodiester. May act as an RNA ligase with broad substrate specificity, and may function toward other RNAs. The chain is RNA-splicing ligase RtcB homolog from Micromonas commoda (strain RCC299 / NOUM17 / CCMP2709) (Picoplanktonic green alga).